The sequence spans 216 residues: UDP-N-acetylbacillosamine N-acetyltransferase (216 aa).

Histidine 137 acts as the Proton acceptor in catalysis. An acetyl-CoA-binding site is contributed by histidine 146.

This sequence belongs to the transferase hexapeptide repeat family. In terms of assembly, forms oligomers.

The enzyme catalyses UDP-N-acetylbacillosamine + acetyl-CoA = UDP-N,N'-diacetylbacillosamine + CoA + H(+). Catalyzes the conversion of UDP-2,4,6-trideoxy-2-acetamido-4-amino glucose to UDP-2,4,6-trideoxy-2,4-diacetamido glucose, commonly known as UDP-N,N'-diacetylbacillosamine (UDP-diNAcBac). The sequence is that of UDP-N-acetylbacillosamine N-acetyltransferase from Bacillus subtilis (strain 168).